Here is a 458-residue protein sequence, read N- to C-terminus: Ribulose bisphosphate carboxylase large chain (458 aa).

Residue lysine 7 is modified to N6,N6,N6-trimethyllysine. Positions 116 and 166 each coordinate substrate. Lysine 168 (proton acceptor) is an active-site residue. Lysine 170 lines the substrate pocket. Mg(2+) is bound by residues lysine 194, aspartate 196, and glutamate 197. At lysine 194 the chain carries N6-carboxylysine. Residue histidine 287 is the Proton acceptor of the active site. Residues arginine 288, histidine 320, and serine 372 each coordinate substrate.

It belongs to the RuBisCO large chain family. Type I subfamily. Heterohexadecamer of 8 large chains and 8 small chains; disulfide-linked. The disulfide link is formed within the large subunit homodimers. The cofactor is Mg(2+). Post-translationally, the disulfide bond which can form in the large chain dimeric partners within the hexadecamer appears to be associated with oxidative stress and protein turnover.

It is found in the plastid. Its subcellular location is the chloroplast. It carries out the reaction 2 (2R)-3-phosphoglycerate + 2 H(+) = D-ribulose 1,5-bisphosphate + CO2 + H2O. The catalysed reaction is D-ribulose 1,5-bisphosphate + O2 = 2-phosphoglycolate + (2R)-3-phosphoglycerate + 2 H(+). Functionally, ruBisCO catalyzes two reactions: the carboxylation of D-ribulose 1,5-bisphosphate, the primary event in carbon dioxide fixation, as well as the oxidative fragmentation of the pentose substrate in the photorespiration process. Both reactions occur simultaneously and in competition at the same active site. The chain is Ribulose bisphosphate carboxylase large chain from Gladiolus gueinzii (Coastal gladiolus).